The chain runs to 945 residues: Isoleucine--tRNA ligase (945 aa).

A 'HIGH' region motif is present at residues P66–H76. E581 lines the L-isoleucyl-5'-AMP pocket. A 'KMSKS' region motif is present at residues K622–S626. K625 serves as a coordination point for ATP. The Zn(2+) site is built by C908, C911, C928, and C931.

The protein belongs to the class-I aminoacyl-tRNA synthetase family. IleS type 1 subfamily. As to quaternary structure, monomer. Requires Zn(2+) as cofactor.

It localises to the cytoplasm. It catalyses the reaction tRNA(Ile) + L-isoleucine + ATP = L-isoleucyl-tRNA(Ile) + AMP + diphosphate. Its function is as follows. Catalyzes the attachment of isoleucine to tRNA(Ile). As IleRS can inadvertently accommodate and process structurally similar amino acids such as valine, to avoid such errors it has two additional distinct tRNA(Ile)-dependent editing activities. One activity is designated as 'pretransfer' editing and involves the hydrolysis of activated Val-AMP. The other activity is designated 'posttransfer' editing and involves deacylation of mischarged Val-tRNA(Ile). In Paraburkholderia xenovorans (strain LB400), this protein is Isoleucine--tRNA ligase.